We begin with the raw amino-acid sequence, 2357 residues long: Protein transport protein Sec16A (2357 aa).

Disordered stretches follow at residues 1–225, 240–347, 394–463, 504–562, 579–630, 666–689, 714–739, 778–820, 917–1008, 1023–1055, and 1076–1151; these read MQPP…SYQH, QAAS…AHHP, SFSS…GTGT, YGPL…ARPQ, DTSG…TSAN, KRRA…DNME, TAGT…GPVK, SEVV…PPKV, VTGA…QEEA, PVRM…LHNQ, and QPEL…AAVR. 2 stretches are compositionally biased toward polar residues: residues 57-75 and 94-104; these read NRQT…SSLP and TPTNAGDSSTG. Residues 208 to 221 are compositionally biased toward low complexity; that stretch reads MPGQWGPAQGGPQP. The span at 281–290 shows a compositional bias: polar residues; the sequence is VHQQSKNHPL. At serine 311 the chain carries Phosphoserine. A compositionally biased stretch (polar residues) spans 333-342; sequence PFTQGNSPEN. A compositionally biased stretch (low complexity) spans 540-561; sequence PDSVSSSYSSHSHRSPPGSARP. Serine 581, serine 591, serine 609, serine 611, and serine 614 each carry phosphoserine. Over residues 581–590 the composition is skewed to polar residues; sequence SGSFFKQIDS. The residue at position 615 (threonine 615) is a Phosphothreonine. At serine 617 the chain carries Phosphoserine. Polar residues-rich tracts occupy residues 921-959, 972-997, and 1029-1041; these read SLPS…QTPQ, FVSS…PNSN, and PSPS…QQPL. A required for localization to endoplasmic reticulum exit sites region spans residues 1037 to 1905; that stretch reads SQQPLPNHPR…QHVERQIQEG (869 aa). Serine 1087 carries the phosphoserine modification. Positions 1118–1415 are interaction with MIA3; sequence ASPASVNTGQ…EAPHAPGSFH (298 aa). A required for endoplasmic reticulum localization region spans residues 1119-1420; it reads SPASVNTGQL…PGSFHGDYAY (302 aa). Residues 1134–1150 are compositionally biased toward low complexity; sequence QASSASVTSTNSSQAAV. Position 1223 is a phosphoserine (serine 1223). Residues 1226 to 1253 form a disordered region; sequence AENHRYSEPERPSSRASHYSDQLAPRQG. Basic and acidic residues predominate over residues 1227 to 1238; it reads ENHRYSEPERPS. Serine 1245 carries the phosphoserine modification. Threonine 1340 is subject to Phosphothreonine. Serine 1342, serine 1362, serine 1365, serine 1371, serine 1374, serine 1377, serine 1384, serine 1588, and serine 1616 each carry phosphoserine. Positions 1344-1395 are disordered; the sequence is DDDAEIHRDPYGEEADRRSIHSEHSARSLRSTHSLPSRRSSLSSHSHQSQIY. Residues 1348-1369 show a composition bias toward basic and acidic residues; it reads EIHRDPYGEEADRRSIHSEHSA. Residues 1371 to 1392 show a composition bias toward low complexity; sequence SLRSTHSLPSRRSSLSSHSHQS. The central conserved domain (CCD); mediates interaction with RNF183, LRRK2 and SEC13 stretch occupies residues 1449–1905; that stretch reads QVPSRPTSPE…QHVERQIQEG (457 aa). The disordered stretch occupies residues 1907–1943; sequence VLWSQDGTEPQQCRITSGSEVEQSDGPGLNQQAGPQA. Residues 1908-1927 show a composition bias toward polar residues; it reads LWSQDGTEPQQCRITSGSEV. The residue at position 1922 (threonine 1922) is a Phosphothreonine. Phosphoserine is present on residues serine 1951, serine 2043, serine 2063, serine 2077, and serine 2094. Disordered regions lie at residues 1993–2141, 2156–2198, and 2240–2357; these read ELSP…RTEA, KKNQ…PTAS, and PLPI…AALN. The span at 2092–2105 shows a compositional bias: polar residues; that stretch reads GSSSLTRAPSLTSD. The span at 2106 to 2126 shows a compositional bias: basic and acidic residues; it reads SEGKKPAQAVKKEPKEPKKTE. Residues 2126-2357 are required for interaction with SEC23A; sequence ESWFSRWLPG…IGQRKYAALN (232 aa). At serine 2291 the chain carries Phosphoserine. Over residues 2332 to 2343 the composition is skewed to polar residues; the sequence is QLVQASVTSGNS.

Belongs to the SEC16 family. As to quaternary structure, SEC16A and SEC16B are each present in multiple copies in a heteromeric complex. Interacts with SEC23A. Interacts with RNF183, RNF152, MIA3 and SEC13. Interacts with GORASP2 in response to ER stress. Interacts with LRRK2 (via ROC domain). Interacts with RAB10.

The protein localises to the endoplasmic reticulum membrane. It localises to the golgi apparatus membrane. It is found in the cytoplasm. Its subcellular location is the perinuclear region. The protein resides in the cytosol. The protein localises to the microsome membrane. Functionally, acts as a molecular scaffold that plays a key role in the organization of the endoplasmic reticulum exit sites (ERES), also known as transitional endoplasmic reticulum (tER). SAR1A-GTP-dependent assembly of SEC16A on the ER membrane forms an organized scaffold defining an ERES. Required for secretory cargo traffic from the endoplasmic reticulum to the Golgi apparatus. Mediates the recruitment of MIA3/TANGO to ERES. Regulates both conventional (ER/Golgi-dependent) and GORASP2-mediated unconventional (ER/Golgi-independent) trafficking of CFTR to cell membrane. Acts as a RAB10 effector in the regulation of insulin-induced SLC2A4/GLUT4 glucose transporter-enriched vesicles delivery to the plasma membrane in adipocytes. The polypeptide is Protein transport protein Sec16A (Sec16a) (Mus musculus (Mouse)).